The chain runs to 292 residues: ATP synthase gamma chain (292 aa).

This sequence belongs to the ATPase gamma chain family. F-type ATPases have 2 components, CF(1) - the catalytic core - and CF(0) - the membrane proton channel. CF(1) has five subunits: alpha(3), beta(3), gamma(1), delta(1), epsilon(1). CF(0) has three main subunits: a, b and c.

It localises to the cell membrane. Produces ATP from ADP in the presence of a proton gradient across the membrane. The gamma chain is believed to be important in regulating ATPase activity and the flow of protons through the CF(0) complex. The sequence is that of ATP synthase gamma chain from Caldicellulosiruptor saccharolyticus (strain ATCC 43494 / DSM 8903 / Tp8T 6331).